Reading from the N-terminus, the 393-residue chain is NAD(P)H-quinone oxidoreductase subunit H, chloroplastic (393 aa).

It belongs to the complex I 49 kDa subunit family. In terms of assembly, NDH is composed of at least 16 different subunits, 5 of which are encoded in the nucleus.

The protein localises to the plastid. The protein resides in the chloroplast thylakoid membrane. It catalyses the reaction a plastoquinone + NADH + (n+1) H(+)(in) = a plastoquinol + NAD(+) + n H(+)(out). The enzyme catalyses a plastoquinone + NADPH + (n+1) H(+)(in) = a plastoquinol + NADP(+) + n H(+)(out). Its function is as follows. NDH shuttles electrons from NAD(P)H:plastoquinone, via FMN and iron-sulfur (Fe-S) centers, to quinones in the photosynthetic chain and possibly in a chloroplast respiratory chain. The immediate electron acceptor for the enzyme in this species is believed to be plastoquinone. Couples the redox reaction to proton translocation, and thus conserves the redox energy in a proton gradient. The sequence is that of NAD(P)H-quinone oxidoreductase subunit H, chloroplastic from Lactuca sativa (Garden lettuce).